The following is a 307-amino-acid chain: PCP degradation transcriptional activation protein (307 aa).

In terms of domain architecture, HTH lysR-type spans 6-63 (LPLGHLMVFDALYRHGSAGKAAHALSMPQPTLSRWLAQLRTHFDDPLFVRTRSGMEPT). The segment at residues 23–42 (AGKAAHALSMPQPTLSRWLA) is a DNA-binding region (H-T-H motif).

It belongs to the LysR transcriptional regulatory family.

Transcriptional activator for the pcpA, pcpB and pcpE genes for pentachlorophenol (PCP) degradation. Essential for PCP degradation. The chain is PCP degradation transcriptional activation protein (pcpR) from Sphingobium chlorophenolicum.